Consider the following 485-residue polypeptide: Proline--tRNA ligase (485 aa).

Belongs to the class-II aminoacyl-tRNA synthetase family. ProS type 3 subfamily. In terms of assembly, homodimer.

The protein localises to the cytoplasm. It catalyses the reaction tRNA(Pro) + L-proline + ATP = L-prolyl-tRNA(Pro) + AMP + diphosphate. Catalyzes the attachment of proline to tRNA(Pro) in a two-step reaction: proline is first activated by ATP to form Pro-AMP and then transferred to the acceptor end of tRNA(Pro). This Methanopyrus kandleri (strain AV19 / DSM 6324 / JCM 9639 / NBRC 100938) protein is Proline--tRNA ligase.